A 1289-amino-acid polypeptide reads, in one-letter code: uncharacterized protein (1289 aa).

The signal sequence occupies residues 1–23 (MRKYTVIASILLSFLSVLSGGHH). An LTD domain is found at 141 to 277 (EGYQADLAHI…VVISTNTGKD (137 aa)).

This is an uncharacterized protein from Bacillus subtilis (strain 168).